The following is a 669-amino-acid chain: UvrABC system protein B (669 aa).

The region spanning 26–183 is the Helicase ATP-binding domain; the sequence is TNFHAGIAKQ…RHLTELQYTR (158 aa). 39–46 contributes to the ATP binding site; that stretch reads GVTGSGKT. Residues 92–115 carry the Beta-hairpin motif; that stretch reads YYDYYQPEAYVPASDTFIEKDSSI. A Helicase C-terminal domain is found at 431–597; the sequence is QVDDLISQIN…SVVRPISDIL (167 aa). The UVR domain maps to 631–666; that stretch reads AAQMKVLEQKMYQHARDLEFEDAARIRDQIQRLREA.

Belongs to the UvrB family. In terms of assembly, forms a heterotetramer with UvrA during the search for lesions. Interacts with UvrC in an incision complex.

The protein resides in the cytoplasm. The UvrABC repair system catalyzes the recognition and processing of DNA lesions. A damage recognition complex composed of 2 UvrA and 2 UvrB subunits scans DNA for abnormalities. Upon binding of the UvrA(2)B(2) complex to a putative damaged site, the DNA wraps around one UvrB monomer. DNA wrap is dependent on ATP binding by UvrB and probably causes local melting of the DNA helix, facilitating insertion of UvrB beta-hairpin between the DNA strands. Then UvrB probes one DNA strand for the presence of a lesion. If a lesion is found the UvrA subunits dissociate and the UvrB-DNA preincision complex is formed. This complex is subsequently bound by UvrC and the second UvrB is released. If no lesion is found, the DNA wraps around the other UvrB subunit that will check the other stand for damage. This Xylella fastidiosa (strain M23) protein is UvrABC system protein B.